We begin with the raw amino-acid sequence, 101 residues long: Urease subunit beta (101 aa).

The protein belongs to the urease beta subunit family. In terms of assembly, heterotrimer of UreA (gamma), UreB (beta) and UreC (alpha) subunits. Three heterotrimers associate to form the active enzyme.

It localises to the cytoplasm. The enzyme catalyses urea + 2 H2O + H(+) = hydrogencarbonate + 2 NH4(+). It participates in nitrogen metabolism; urea degradation; CO(2) and NH(3) from urea (urease route): step 1/1. This is Urease subunit beta from Bradyrhizobium sp. (strain ORS 278).